Reading from the N-terminus, the 331-residue chain is 6-phosphogluconolactonase (331 aa).

K287 carries the post-translational modification N6-acetyllysine.

It belongs to the cycloisomerase 2 family.

The catalysed reaction is 6-phospho-D-glucono-1,5-lactone + H2O = 6-phospho-D-gluconate + H(+). It participates in carbohydrate degradation; pentose phosphate pathway; D-ribulose 5-phosphate from D-glucose 6-phosphate (oxidative stage): step 2/3. In terms of biological role, catalyzes the hydrolysis of 6-phosphogluconolactone to 6-phosphogluconate. The sequence is that of 6-phosphogluconolactonase from Shigella boydii serotype 18 (strain CDC 3083-94 / BS512).